The sequence spans 565 residues: Phosphatidylinositol 4-kinase gamma 4 (565 aa).

2 consecutive Ubiquitin-like domains span residues 32 to 104 and 109 to 187; these read IVIF…LVVR and RAIS…RPAK. The region spanning 257 to 542 is the PI3K/PI4K catalytic domain; the sequence is GYLPVMSTEG…AILPGTSEET (286 aa). Positions 263–269 are G-loop; the sequence is STEGSGG. ATP contacts are provided by residues 264 to 270 and lysine 286; that span reads TEGSGGV. The tract at residues 291 to 311 is disordered; that stretch reads EPMAKNNPRGLPLSTDGEGLK. Position 369-372 (369-372) interacts with ATP; the sequence is QLFV. The tract at residues 402–410 is catalytic loop; that stretch reads ANADRHAGN. Residues 425-451 are activation loop; sequence PIDHGYCLPEKFEDCTFEWLYWPQARE. Aspartate 427 provides a ligand contact to ATP.

The protein belongs to the PI3/PI4-kinase family. Type II PI4K subfamily. As to quaternary structure, interacts with FTIP1 and RPN10. In terms of tissue distribution, specifically expressed in the phloem including companion cells.

It localises to the nucleus. It is found in the endoplasmic reticulum. The catalysed reaction is a 1,2-diacyl-sn-glycero-3-phospho-(1D-myo-inositol) + ATP = a 1,2-diacyl-sn-glycero-3-phospho-(1D-myo-inositol 4-phosphate) + ADP + H(+). The phosphorylation of phosphatidylinositol (PI) to PI4P is the first committed step in the generation of phosphatidylinositol 4,5-bisphosphate (PIP2), a precursor of the second messenger inositol 1,4,5-trisphosphate (InsP3). Involved in the control of flowering under long day conditions by promoting degradation of FTIP1. Recruits FTIP1 for degradation by the 26S proteasome in leaves, which affects RFT1 transport to the shoot apical meristem (SAM). This is Phosphatidylinositol 4-kinase gamma 4 from Oryza sativa subsp. japonica (Rice).